Here is a 139-residue protein sequence, read N- to C-terminus: Gastrula zinc finger protein XlCGF67.1 (139 aa).

5 consecutive C2H2-type zinc fingers follow at residues 6 to 28, 33 to 55, 61 to 83, 89 to 111, and 117 to 139; these read VSCPECGKCFTSRTYLNVHKKVH, YSCSECGKSFLSRSHLNTHLRTH, YSCSECGKCFTSSAILITHKRIH, FSCQECGKSFSYRSVFMEHQKIH, and FSCSDCGKCFRYRSHLKVHSRIH.

The protein belongs to the krueppel C2H2-type zinc-finger protein family.

It localises to the nucleus. Its function is as follows. May be involved in transcriptional regulation. This Xenopus laevis (African clawed frog) protein is Gastrula zinc finger protein XlCGF67.1.